Consider the following 226-residue polypeptide: Urease accessory protein UreF (226 aa).

Belongs to the UreF family. As to quaternary structure, ureD, UreF and UreG form a complex that acts as a GTP-hydrolysis-dependent molecular chaperone, activating the urease apoprotein by helping to assemble the nickel containing metallocenter of UreC. The UreE protein probably delivers the nickel.

The protein localises to the cytoplasm. In terms of biological role, required for maturation of urease via the functional incorporation of the urease nickel metallocenter. The chain is Urease accessory protein UreF from Burkholderia vietnamiensis (strain G4 / LMG 22486) (Burkholderia cepacia (strain R1808)).